A 179-amino-acid chain; its full sequence is Calcineurin subunit B type 2 (179 aa).

G2 carries the N-myristoyl glycine lipid modification. EF-hand domains follow at residues 18 to 53 (EEIRRLGKSFRKLDLDKSGSLSIEEFMRLPELQQNP), 57 to 85 (RVIDIFDTDGNGEVDFHEFIVGTSQFSVK), 87 to 122 (DEEQKLRFAFRIYDMDNDGFISNGELFQVLKMMVGN), and 128 to 163 (QLQQLVDKSILVLDKDGDGRISFEEFSDVVKTMEIH). Ca(2+) is bound by residues D31, D33, S35, S37, E42, D63, D65, N67, E69, E74, D100, D102, D104, and E111. The tract at residues 131–136 (QLVDKS) is calcineurin A binding. Residues D141, D143, D145, R147, and E152 each coordinate Ca(2+).

The protein belongs to the calcineurin regulatory subunit family. Forms a complex composed of a calmodulin-dependent catalytic subunit (also known as calcineurin A) and a regulatory Ca(2+)-binding subunit (also known as calcineurin B). There are three catalytic subunits, each encoded by a separate gene (PPP3CA, PPP3CB, and PPP3CC) and two regulatory subunits which are also encoded by separate genes (PPP3R1 and PPP3R2). Interacts with SPATA33 (via PQIIIT motif). Expressed in osteoblasts and bone marrow (at protein level). Expressed in the testis. Expressed in the sperm midpiece in a SPATA33-dependent manner (at protein level).

Its subcellular location is the mitochondrion. In terms of biological role, regulatory subunit of calcineurin, a calcium-dependent, calmodulin stimulated protein phosphatase. Confers calcium sensitivity. This Mus musculus (Mouse) protein is Calcineurin subunit B type 2 (Ppp3r2).